The chain runs to 128 residues: Small ribosomal subunit protein uS14m (128 aa).

It belongs to the universal ribosomal protein uS14 family. As to quaternary structure, component of the mitochondrial ribosome small subunit (28S) which comprises a 12S rRNA and about 30 distinct proteins. Interacts with LIAT1.

It localises to the mitochondrion. This chain is Small ribosomal subunit protein uS14m (MRPS14), found in Bos taurus (Bovine).